Consider the following 418-residue polypeptide: D-amino acid dehydrogenase (418 aa).

Position 3-17 (3-17 (VTILGAGVVGVTSAW)) interacts with FAD.

The protein belongs to the DadA oxidoreductase family. FAD serves as cofactor.

The catalysed reaction is a D-alpha-amino acid + A + H2O = a 2-oxocarboxylate + AH2 + NH4(+). It functions in the pathway amino-acid degradation; D-alanine degradation; NH(3) and pyruvate from D-alanine: step 1/1. Its function is as follows. Oxidative deamination of D-amino acids. In Agrobacterium fabrum (strain C58 / ATCC 33970) (Agrobacterium tumefaciens (strain C58)), this protein is D-amino acid dehydrogenase.